A 53-amino-acid polypeptide reads, in one-letter code: uncharacterized protein (53 aa).

The N-terminal stretch at 1-23 (MSILLKILFKLLLLILSITFVIT) is a signal peptide.

This is an uncharacterized protein from Acheta domesticus (House cricket).